A 369-amino-acid chain; its full sequence is MTKKVAVLPGDGVGTEVTKGAVAVLKAIGERFDHQFEFTYGLIGGAAIDEAGTPLPESTIETCKQADAVLLGSVGGPKWDRNPSHLRPEKGLLAIRKELDLYANLRPVTFYDSLADASPLKKEYIEGVDFIIVRELTGGLYFGKPSERRTEGNKETVVDTLFYKRTEIERIIRQAFDTAVNRRKKVTSVDKANVLESSRVWREVAEEVAKDYPDVELEHMLVDSAAMQLIRNPKYFDVVVTENMFGDILSDEASMLTGSLGMLPSASLTADGPSLYEPVHGSAPDIAGQNKANPIAAILSAAMLLRHSFGLEKEAAVIEQAVESVLHAGHRTADLADGNHYLGTDKMVEAITAVIANDSAISSIMTAYS.

76 to 89 (GPKWDRNPSHLRPE) serves as a coordination point for NAD(+). Substrate contacts are provided by Arg-96, Arg-106, Arg-134, and Asp-223. Residues Asp-223, Asp-247, and Asp-251 each coordinate Mg(2+). Residue 281–293 (GSAPDIAGQNKAN) participates in NAD(+) binding.

This sequence belongs to the isocitrate and isopropylmalate dehydrogenases family. LeuB type 1 subfamily. As to quaternary structure, homodimer. The cofactor is Mg(2+). Requires Mn(2+) as cofactor.

The protein localises to the cytoplasm. It carries out the reaction (2R,3S)-3-isopropylmalate + NAD(+) = 4-methyl-2-oxopentanoate + CO2 + NADH. It functions in the pathway amino-acid biosynthesis; L-leucine biosynthesis; L-leucine from 3-methyl-2-oxobutanoate: step 3/4. In terms of biological role, catalyzes the oxidation of 3-carboxy-2-hydroxy-4-methylpentanoate (3-isopropylmalate) to 3-carboxy-4-methyl-2-oxopentanoate. The product decarboxylates to 4-methyl-2 oxopentanoate. The chain is 3-isopropylmalate dehydrogenase (leuB) from Priestia megaterium (strain DSM 319 / IMG 1521) (Bacillus megaterium).